Reading from the N-terminus, the 207-residue chain is Glycerol-3-phosphate acyltransferase (207 aa).

5 helical membrane-spanning segments follow: residues 4-24 (VVAT…SFAV), 58-78 (ILTL…AQLL), 86-106 (DMGI…PVFH), 120-140 (ILLA…LIIA), and 162-182 (VLLF…VLLI).

It belongs to the PlsY family. In terms of assembly, probably interacts with PlsX.

The protein localises to the cell inner membrane. The catalysed reaction is an acyl phosphate + sn-glycerol 3-phosphate = a 1-acyl-sn-glycero-3-phosphate + phosphate. It participates in lipid metabolism; phospholipid metabolism. Its function is as follows. Catalyzes the transfer of an acyl group from acyl-phosphate (acyl-PO(4)) to glycerol-3-phosphate (G3P) to form lysophosphatidic acid (LPA). This enzyme utilizes acyl-phosphate as fatty acyl donor, but not acyl-CoA or acyl-ACP. This chain is Glycerol-3-phosphate acyltransferase, found in Ralstonia nicotianae (strain ATCC BAA-1114 / GMI1000) (Ralstonia solanacearum).